Consider the following 316-residue polypeptide: Acetyl-coenzyme A carboxylase carboxyl transferase subunit alpha (316 aa).

One can recognise a CoA carboxyltransferase C-terminal domain in the interval 40–293 (LEKRSRDALR…GDLIAKTMKE (254 aa)).

The protein belongs to the AccA family. Acetyl-CoA carboxylase is a heterohexamer composed of biotin carboxyl carrier protein (AccB), biotin carboxylase (AccC) and two subunits each of ACCase subunit alpha (AccA) and ACCase subunit beta (AccD).

The protein resides in the cytoplasm. It catalyses the reaction N(6)-carboxybiotinyl-L-lysyl-[protein] + acetyl-CoA = N(6)-biotinyl-L-lysyl-[protein] + malonyl-CoA. Its pathway is lipid metabolism; malonyl-CoA biosynthesis; malonyl-CoA from acetyl-CoA: step 1/1. Its function is as follows. Component of the acetyl coenzyme A carboxylase (ACC) complex. First, biotin carboxylase catalyzes the carboxylation of biotin on its carrier protein (BCCP) and then the CO(2) group is transferred by the carboxyltransferase to acetyl-CoA to form malonyl-CoA. In Mesorhizobium japonicum (strain LMG 29417 / CECT 9101 / MAFF 303099) (Mesorhizobium loti (strain MAFF 303099)), this protein is Acetyl-coenzyme A carboxylase carboxyl transferase subunit alpha.